The following is a 426-amino-acid chain: Protein prenyltransferase alpha subunit repeat-containing protein 1 (426 aa).

PFTA repeat units follow at residues 86–119 (ALVD…VLNP), 121–154 (KDLY…QKEC), 180–213 (EEMR…AKGN), and 219–252 (DELS…AKEL). Residues 255 to 279 (AAEKDVHTSQQPNGENTATASDDNH) are disordered. Residues 262–275 (TSQQPNGENTATAS) are compositionally biased toward polar residues. A PFTA 5 repeat occupies 290–323 (EEIQLCTDLIESYPGHETLWCHRRHVFYLWHQWR).

It belongs to the protein prenyltransferase subunit alpha family.

The chain is Protein prenyltransferase alpha subunit repeat-containing protein 1 (ptar1) from Danio rerio (Zebrafish).